Reading from the N-terminus, the 508-residue chain is Lysine--tRNA ligase (508 aa).

Residues Glu416 and Glu423 each contribute to the Mg(2+) site.

It belongs to the class-II aminoacyl-tRNA synthetase family. In terms of assembly, homodimer. It depends on Mg(2+) as a cofactor.

The protein resides in the cytoplasm. The catalysed reaction is tRNA(Lys) + L-lysine + ATP = L-lysyl-tRNA(Lys) + AMP + diphosphate. This Prochlorococcus marinus (strain MIT 9313) protein is Lysine--tRNA ligase.